The sequence spans 180 residues: Guanosine-3',5'-bis(diphosphate) 3'-pyrophosphohydrolase MESH1 (180 aa).

Positions 33-128 constitute an HD domain; the sequence is YINHPIGVAR…VKLADKLYNL (96 aa). Mn(2+) contacts are provided by H36, H62, and D63. Residues E66 and D67 each act as nucleophile in the active site. A Mn(2+)-binding site is contributed by D123.

It belongs to the MESH1 family. Mn(2+) is required as a cofactor.

It carries out the reaction guanosine 3',5'-bis(diphosphate) + H2O = GDP + diphosphate + H(+). PpGpp hydrolyzing enzyme involved in starvation response. The protein is Guanosine-3',5'-bis(diphosphate) 3'-pyrophosphohydrolase MESH1 (hddc3) of Danio rerio (Zebrafish).